Consider the following 532-residue polypeptide: Spore germination protein 270-11 (532 aa).

Disordered stretches follow at residues 113-225 (TTTS…GYGS) and 328-436 (LSPT…TTGT). Positions 329 to 426 (SPTCSDSSSP…GSGSSSETQP (98 aa)) are enriched in low complexity. A run of 13 repeats spans residues 339–342 (TPTP), 343–346 (TETP), 347–350 (TETP), 351–354 (TETP), 355–358 (TETP), 359–362 (TETP), 363–366 (TETP), 367–370 (TETP), 371–374 (TETE), 375–378 (TPTP), 397–400 (TPTP), 401–404 (TETD), and 405–408 (TPTP). The segment at 339-378 (TPTPTETPTETPTETPTETPTETPTETPTETPTETETPTP) is 10 X 4 AA tandem repeats of T-[EP]-T-[EP]. The 3 X 4 AA tandem repeats of T-[EP]-T-[PD] stretch occupies residues 397 to 408 (TPTPTETDTPTP).

The polypeptide is Spore germination protein 270-11 (celB) (Dictyostelium discoideum (Social amoeba)).